A 94-amino-acid chain; its full sequence is UPF0768 protein YBL029C-A (94 aa).

Belongs to the UPF0768 family.

It localises to the cell membrane. The sequence is that of UPF0768 protein YBL029C-A from Saccharomyces cerevisiae (strain ATCC 204508 / S288c) (Baker's yeast).